We begin with the raw amino-acid sequence, 197 residues long: FMN-dependent NADH:quinone oxidoreductase (197 aa).

Residues S10, 16-18 (SQS), 93-96 (MYNF), and 137-140 (TRGG) contribute to the FMN site.

This sequence belongs to the azoreductase type 1 family. Homodimer. Requires FMN as cofactor.

It carries out the reaction 2 a quinone + NADH + H(+) = 2 a 1,4-benzosemiquinone + NAD(+). The enzyme catalyses N,N-dimethyl-1,4-phenylenediamine + anthranilate + 2 NAD(+) = 2-(4-dimethylaminophenyl)diazenylbenzoate + 2 NADH + 2 H(+). Functionally, quinone reductase that provides resistance to thiol-specific stress caused by electrophilic quinones. In terms of biological role, also exhibits azoreductase activity. Catalyzes the reductive cleavage of the azo bond in aromatic azo compounds to the corresponding amines. This Shewanella frigidimarina (strain NCIMB 400) protein is FMN-dependent NADH:quinone oxidoreductase.